Here is a 181-residue protein sequence, read N- to C-terminus: 30 kDa heat shock protein (181 aa).

Positions 33 to 181 (ASVQSFAPRF…PPTAKKITIQ (149 aa)) constitute a sHSP domain. Over residues 79–115 (GRSEREYHSSSDDNKNDQADTENQARGESSEVAKTGE) the composition is skewed to basic and acidic residues. Residues 79–127 (GRSEREYHSSSDDNKNDQADTENQARGESSEVAKTGEKQVSTKKAANKS) are disordered.

Belongs to the small heat shock protein (HSP20) family.

The sequence is that of 30 kDa heat shock protein (hsp30) from Emericella nidulans (strain FGSC A4 / ATCC 38163 / CBS 112.46 / NRRL 194 / M139) (Aspergillus nidulans).